The primary structure comprises 232 residues: Large ribosomal subunit protein uL1 (232 aa).

The protein belongs to the universal ribosomal protein uL1 family. In terms of assembly, part of the 50S ribosomal subunit.

In terms of biological role, binds directly to 23S rRNA. The L1 stalk is quite mobile in the ribosome, and is involved in E site tRNA release. Protein L1 is also a translational repressor protein, it controls the translation of the L11 operon by binding to its mRNA. The chain is Large ribosomal subunit protein uL1 from Burkholderia cenocepacia (strain HI2424).